A 528-amino-acid chain; its full sequence is MSNLFTRRLALLADDAHRDLLNQGRRGIERETLRVDLQGKLALGPHPVALGSALTNPQITTDYSESLLEFITPAEHDVATALEELDRIHRFANAKLDHELLWSQSMPCTLPEEADIPIAWYGTSHIGMIKHVYRRGLALRYGKAMQCIAGLHYNYSLSEDLWRVIKQSEQSRLDDKSYQSESYISLIRNFQRYSWLLMYLFGASPALSTHFLRGREHELQTLSDDTLYLPYATSLRMSDLGYQNNAQAGLMPPYNDLESYMRSLSRAVRQAYPAYEAIGTRRNGEWIQLNTNLLQIENEYYATIRPKRVINSGERPVEALCARGVQYIEVRCMDIDPFEPLGISLPTSRFLDAFLLFCALDDSPLTDEANNRERTENFARTVKEGRRPGLLLQRDGAAVKLQDWGLELLERIQATADLLDAQRADSQHAQALAAQKEKLLDAGLTPSARVLAELQATDKSFEQFGLRQSIAHAEYFRARPLNAEENFYFETLAKTSIAEQEEMERTQSGDFDAFVEAYNQRTPQQLCD.

The protein belongs to the glutamate--cysteine ligase type 1 family. Type 1 subfamily.

It catalyses the reaction L-cysteine + L-glutamate + ATP = gamma-L-glutamyl-L-cysteine + ADP + phosphate + H(+). Its pathway is sulfur metabolism; glutathione biosynthesis; glutathione from L-cysteine and L-glutamate: step 1/2. The protein is Glutamate--cysteine ligase of Janthinobacterium sp. (strain Marseille) (Minibacterium massiliensis).